The primary structure comprises 231 residues: UPF0758 protein RBAM_025090 (231 aa).

Residues 109 to 231 (VIRSPEDGAK…FVSLKEKGYL (123 aa)) form the MPN domain. Residues His180, His182, and Asp193 each coordinate Zn(2+). The short motif at 180-193 (HNHPSGDPTPSRED) is the JAMM motif element.

This sequence belongs to the UPF0758 family.

This chain is UPF0758 protein RBAM_025090, found in Bacillus velezensis (strain DSM 23117 / BGSC 10A6 / LMG 26770 / FZB42) (Bacillus amyloliquefaciens subsp. plantarum).